The following is a 656-amino-acid chain: PAN2-PAN3 deadenylation complex subunit PAN3 (656 aa).

A C3H1-type zinc finger spans residues 15–44 (SFKGTQCRNIIIHGYCKFENEGCQFNHGNS). The disordered stretch occupies residues 71-104 (KTSSSFTPGKSPAVRSPDFSSLPAFQPGAPVNDQ). The PABPC-interacting motif-2 (PAM-2) motif lies at 128 to 148 (AFAPSFNPYASESFTPSVSAG). The pseudokinase domain stretch occupies residues 271–525 (QVFPRGSLPD…NIEDFTKLFS (255 aa)). ATP contacts are provided by residues R325, 375 to 382 (DYYPQSQS), and 428 to 429 (KK). A coiled-coil region spans residues 526-564 (HKVLSVVNSLQYNSEYLEQQLSRELENARLFRLMCKLNA). Positions 565–656 (IYGRLESRID…IDSTFRALTQ (92 aa)) are knob domain.

It belongs to the protein kinase superfamily. PAN3 family. In terms of assembly, homodimer. Forms a heterotrimer with a catalytic subunit PAN2 to form the poly(A)-nuclease (PAN) deadenylation complex. Interacts (via PAM-2 motif) with poly(A)-binding protein PAB1 (via PABC domain), conferring substrate specificity of the enzyme complex.

It is found in the cytoplasm. Regulatory subunit of the poly(A)-nuclease (PAN) deadenylation complex, one of two cytoplasmic mRNA deadenylases involved in mRNA turnover. PAN specifically shortens poly(A) tails of RNA and the activity is stimulated by poly(A)-binding protein PAB1. PAN deadenylation is followed by rapid degradation of the shortened mRNA tails by the CCR4-NOT complex. Deadenylated mRNAs are then degraded by two alternative mechanisms, namely exosome-mediated 3'-5' exonucleolytic degradation, or deadenylation-dependent mRNA decaping and subsequent 5'-3' exonucleolytic degradation by XRN1. May also be involved in post-transcriptional maturation of mRNA poly(A) tails. PAN3 acts as a positive regulator for PAN activity, recruiting the catalytic subunit PAN2 to mRNA via its interaction with RNA and with PAB1. In Kluyveromyces lactis (strain ATCC 8585 / CBS 2359 / DSM 70799 / NBRC 1267 / NRRL Y-1140 / WM37) (Yeast), this protein is PAN2-PAN3 deadenylation complex subunit PAN3.